A 531-amino-acid polypeptide reads, in one-letter code: MGAMGAAEPLHSVLWVKRRRCAVSLEPARALLRWWRSPEPGPSAPGADARSVLVSEIIAVEEKDDCEKHASSGRWHKMENPFAFTVHRVKRVRHHRWKWARVTFWSADEQLCHLWLQTLRGLLESLTSRPKHLLVFINPFGGKGQGKRIYEKTVAPLFTLASITTEIIITEHANQAKETLYEINTDSYDGIVCVGGDGMFSEVLHGVIGRTQQSAGIDPNHPRAVLVPSTLRIGIIPAGSTDCVCYSTVGTNDAETSALHIIIGDSLAIDVSSVHYHNTLLRYSVSLLGYGFYGDLIKDSEKKRWMGLVRYDFSGLKTFLSHQYYEGTLSFLPAQHTVGSPRDNKPCRAGCFVCRQSKQQLEEEEKKALYGLENAEEMEEWQVTCGKFLAINATNMSCACPRSPGGLSPFAHLGDGSSDLILIRKCSRFNFLRFLIRHTNQEDQFDFTFVEVYRVKKFHFTSKHVEDEDNDSKEQEKQKFGKICKDRPSCTCSASRSSWNCDGEVMHSPAIEVRVHCQLVRLFARGIEEES.

Residues Met-1 to Trp-115 are essential for enzyme activity. A required for binding to sulfatide and phosphoinositides region spans residues Met-1–Ser-125. The 151-residue stretch at Ser-128–Asn-278 folds into the DAGKc domain. ATP-binding positions include Asn-138 to Phe-140 and Thr-170 to Asn-174. Gly-195–Gly-198 is a binding site for substrate. Asp-197 acts as the Proton donor/acceptor in catalysis. Residues Glu-202, Gly-239–Thr-241, Arg-304, and Arg-310 contribute to the ATP site. Phosphoserine occurs at positions 340 and 408. Position 502-504 (Asp-502–Glu-504) interacts with ATP.

Ca(2+) serves as cofactor. The cofactor is Mg(2+). In terms of tissue distribution, high level expression in heart, brain, testis and pancreas; low expression in spleen, liver and lung; not detected in skeletal muscle.

It localises to the cytoplasm. Its subcellular location is the cell membrane. The enzyme catalyses an N-acylsphing-4-enine + ATP = an N-acylsphing-4-enine 1-phosphate + ADP + H(+). The catalysed reaction is N-(hexanoyl)sphing-4-enine + ATP = N-hexanoylsphing-4-enine 1-phosphate + ADP + H(+). It catalyses the reaction N-(acetyl)-sphing-4-enine + ATP = N-(acetyl)-sphing-4-enine-1-phosphate + ADP + H(+). It carries out the reaction N-hexadecanoylsphing-4-enine + ATP = N-(hexadecanoyl)-sphing-4-enine-1-phosphate + ADP + H(+). The enzyme catalyses N-hexanoyl-(4R)-hydroxysphinganine + ATP = N-hexanoyl-(4R)-hydroxysphinganine-1-phosphate + ADP + H(+). In terms of biological role, catalyzes specifically the phosphorylation of ceramide to form ceramide 1-phosphate. Acts efficiently on natural and analog ceramides (C6, C8, C16 ceramides, and C8-dihydroceramide), to a lesser extent on C2-ceramide and C6-dihydroceramide, but not on other lipids, such as various sphingosines. Shows a greater preference for D-erythro isomer of ceramides. Binds phosphoinositides. This Mus musculus (Mouse) protein is Ceramide kinase (Cerk).